The primary structure comprises 1740 residues: SH3 and multiple ankyrin repeat domains protein 3 (1740 aa).

The tract at residues 1 to 75 (MDGPGASAVV…KFLDEERLLQ (75 aa)) is intramolecular interaction with the ANK repeats. Residue Tyr122 is modified to Phosphotyrosine. ANK repeat units follow at residues 148-181 (SGEC…FRTR), 182-214 (DGLT…YKDS), 215-245 (RGLT…QLGT), 249-278 (NGWQ…NMGA), 282-311 (SGNT…NKDV), and 315-345 (NSQT…DVVP). The disordered stretch occupies residues 354 to 466 (KRRRLAGPSG…PPPRGPKRKL (113 aa)). Residues Ser373, Ser375, Ser387, and Ser394 each carry the phosphoserine modification. The segment covering 404–415 (LQEEKDRDRDGE) has biased composition (basic and acidic residues). Residues 444 to 460 (APGPGPASPAPPAPPPR) are compositionally biased toward pro residues. One can recognise an SH3 domain in the interval 470-529 (VPGRKFIAVKAHSPQGEGEIPLHRGEAVKVLSIGEGGFWEGTVKGRTGWFPADCVEEVQM). Ser482 is modified (phosphoserine). Residue Tyr555 is modified to Phosphotyrosine. A PDZ domain is found at 570–664 (VAILQKRDHE…RLVMKVVSVT (95 aa)). The segment at 664–687 (TRKPEEDSARRRAPPPPKRAPSTT) is disordered. The segment at 677–684 (PPPPKRAP) is required for interaction with ABI1. Phosphoserine occurs at positions 694, 781, 790, and 801. Disordered stretches follow at residues 759–855 (RQGL…RSSF), 868–1053 (AGLY…QPSR), 1115–1199 (AARE…MILS), 1211–1463 (LIVV…GPAR), and 1476–1518 (GDPV…EPVG). The span at 812-845 (IPPPPQTAPPPPPAPYYFDSGPPPTFSPPPPPPG) shows a compositional bias: pro residues. Residues Ser891 and Ser898 each carry the phosphoserine modification. Thr913 carries the post-translational modification Phosphothreonine. The residue at position 931 (Tyr931) is a Phosphotyrosine. Arg966 is subject to Asymmetric dimethylarginine. Over residues 1017–1027 (VKERRLEERRR) the composition is skewed to basic and acidic residues. A compositionally biased stretch (polar residues) spans 1123 to 1132 (SQTPSRSPTP). At Thr1131 the chain carries Phosphothreonine. Residues Ser1135, Ser1160, Ser1164, and Ser1167 each carry the phosphoserine modification. Residues 1175–1195 (ARREAEKPTREERKSPEDKKS) show a composition bias toward basic and acidic residues. Thr1235 carries the post-translational modification Phosphothreonine. Pro residues-rich tracts occupy residues 1252-1262 (MPSPRAQPPGS) and 1322-1334 (TPPP…PTTV). A Phosphoserine modification is found at Ser1254. Over residues 1335–1344 (PSPASGKPSS) the composition is skewed to low complexity. The segment covering 1361-1371 (ADTRSSSDPHL) has biased composition (basic and acidic residues). The span at 1372–1393 (ETTSTISTVSSMSTLSSESGEL) shows a compositional bias: low complexity. The SH3-binding signature appears at 1411-1417 (PPVPPKP). A Phosphoserine modification is found at Ser1421. A coiled-coil region spans residues 1495–1515 (ISELSSRLQQLNKDTRSLGEE). Over residues 1496–1506 (SELSSRLQQLN) the composition is skewed to polar residues. A phosphoserine mark is found at Ser1511, Ser1522, Ser1530, and Ser1549. Disordered stretches follow at residues 1556–1594 (ISAQ…PASL) and 1637–1673 (VRSV…QQKP). Low complexity predominate over residues 1637–1647 (VRSVSARSRSP). Phosphoserine occurs at positions 1644, 1646, and 1648. The segment covering 1648 to 1658 (SPSPLPSPSPG) has biased composition (pro residues). The segment covering 1659-1668 (SGPSAGPRRP) has biased composition (low complexity). The region spanning 1677–1740 (WSKFDVGDWL…ERALRQLDGS (64 aa)) is the SAM domain.

Belongs to the SHANK family. In terms of assembly, may homomultimerize via its SAM domain. Interacts with BAIAP2, DBNL and SLC17A7/VGLUT1. Interacts with DLGAP1/GKAP, GRM1/MGLUR1, GRM5/MGLUR5 and LZTS3 C-termini via its PDZ domain. Interacts with ABI1, HOMER1, HOMER2, HOMER3 and CTTN/cortactin SH3 domain. Is part of a complex with DLG4/PSD-95 and DLGAP1/GKAP. Interacts (via PDZ domain) with the GRIA1 subunit of the AMPA receptor (via PDZ-binding motif). Interacts with WASF1 and CYFIP2; the interactions mediate the association of SHANK3 with the WAVE1 complex. Interacts with ARPC2; the interaction probably mediates the association of SHANK3 with the Arp2/3 complex. Interacts (via ANK repeats) with SHARPIN and SPTAN1. Interacts (via PDZ domain) with ARHGAP44 (probably via PDZ-binding motif); the interaction takes place in dendritic spines and promotes GRIA1 exocytosis. Interacts with CAMK2A. Interacts with DIP2A. Interacts with ADGRL3. As to expression, widely expressed in brain (at protein level).

The protein localises to the cytoplasm. It localises to the postsynaptic density. Its subcellular location is the cell projection. The protein resides in the dendritic spine. Major scaffold postsynaptic density protein which interacts with multiple proteins and complexes to orchestrate the dendritic spine and synapse formation, maturation and maintenance. Interconnects receptors of the postsynaptic membrane including NMDA-type and metabotropic glutamate receptors via complexes with GKAP/PSD-95 and HOMER, respectively, and the actin-based cytoskeleton. Plays a role in the structural and functional organization of the dendritic spine and synaptic junction through the interaction with Arp2/3 and WAVE1 complex as well as the promotion of the F-actin clusters. By way of this control of actin dynamics, participates in the regulation of developing neurons growth cone motility and the NMDA receptor-signaling. Also modulates GRIA1 exocytosis and GRM5/MGLUR5 expression and signaling to control the AMPA and metabotropic glutamate receptor-mediated synaptic transmission and plasticity. May be required at an early stage of synapse formation and be inhibited by IGF1 to promote synapse maturation. The chain is SH3 and multiple ankyrin repeat domains protein 3 (Shank3) from Rattus norvegicus (Rat).